The chain runs to 398 residues: Bifunctional enzyme IspD/IspF (398 aa).

Residues 1–234 (MTNSPRTAAI…SRLMAALGDI (234 aa)) are 2-C-methyl-D-erythritol 4-phosphate cytidylyltransferase. A 2-C-methyl-D-erythritol 2,4-cyclodiphosphate synthase region spans residues 235-398 (RTGTGYDVHA…LPWGADGLAG (164 aa)). Residues Asp-241 and His-243 each coordinate a divalent metal cation. 4-CDP-2-C-methyl-D-erythritol 2-phosphate-binding positions include 241–243 (DVH) and 267–268 (HS). His-275 contributes to the a divalent metal cation binding site. 4-CDP-2-C-methyl-D-erythritol 2-phosphate-binding positions include 289–291 (DIG), 365–368 (TTSE), Phe-372, and Arg-375.

It in the N-terminal section; belongs to the IspD/TarI cytidylyltransferase family. IspD subfamily. In the C-terminal section; belongs to the IspF family. A divalent metal cation is required as a cofactor.

The catalysed reaction is 2-C-methyl-D-erythritol 4-phosphate + CTP + H(+) = 4-CDP-2-C-methyl-D-erythritol + diphosphate. The enzyme catalyses 4-CDP-2-C-methyl-D-erythritol 2-phosphate = 2-C-methyl-D-erythritol 2,4-cyclic diphosphate + CMP. The protein operates within isoprenoid biosynthesis; isopentenyl diphosphate biosynthesis via DXP pathway; isopentenyl diphosphate from 1-deoxy-D-xylulose 5-phosphate: step 2/6. It participates in isoprenoid biosynthesis; isopentenyl diphosphate biosynthesis via DXP pathway; isopentenyl diphosphate from 1-deoxy-D-xylulose 5-phosphate: step 4/6. In terms of biological role, bifunctional enzyme that catalyzes the formation of 4-diphosphocytidyl-2-C-methyl-D-erythritol from CTP and 2-C-methyl-D-erythritol 4-phosphate (MEP) (IspD), and catalyzes the conversion of 4-diphosphocytidyl-2-C-methyl-D-erythritol 2-phosphate (CDP-ME2P) to 2-C-methyl-D-erythritol 2,4-cyclodiphosphate (ME-CPP) with a corresponding release of cytidine 5-monophosphate (CMP) (IspF). This chain is Bifunctional enzyme IspD/IspF, found in Rhodopseudomonas palustris (strain ATCC BAA-98 / CGA009).